The primary structure comprises 426 residues: Glutamate-1-semialdehyde 2,1-aminomutase (426 aa).

Position 265 is an N6-(pyridoxal phosphate)lysine (Lys-265).

Belongs to the class-III pyridoxal-phosphate-dependent aminotransferase family. HemL subfamily. Homodimer. Pyridoxal 5'-phosphate is required as a cofactor.

The protein resides in the cytoplasm. It carries out the reaction (S)-4-amino-5-oxopentanoate = 5-aminolevulinate. It functions in the pathway porphyrin-containing compound metabolism; protoporphyrin-IX biosynthesis; 5-aminolevulinate from L-glutamyl-tRNA(Glu): step 2/2. This chain is Glutamate-1-semialdehyde 2,1-aminomutase, found in Yersinia pestis bv. Antiqua (strain Antiqua).